The following is a 491-amino-acid chain: Glutamine synthetase (491 aa).

The GS beta-grasp domain maps to 23-111; sequence NNVRQVLCAF…MFGNVYEAWG (89 aa). Residues 119-491 form the GS catalytic domain; sequence PRGYVAKRYE…PWEFMKYFDI (373 aa). Residues glutamate 143 and glutamate 145 each coordinate Mg(2+). Glutamate 225 serves as a coordination point for ATP. Mg(2+) contacts are provided by glutamate 230 and glutamate 238. Residues 282 to 283 and alanine 283 each bind L-glutamate; that span reads NA. Residue histidine 287 coordinates Mg(2+). Residues 289-291 and serine 291 each bind ATP; that span reads HQS. Residues arginine 344, glutamate 350, and arginine 362 each coordinate L-glutamate. Positions 362 and 367 each coordinate ATP. A Mg(2+)-binding site is contributed by glutamate 381. Position 383 (arginine 383) interacts with L-glutamate.

This sequence belongs to the glutamine synthetase family. In terms of assembly, oligomer of 12 subunits arranged in the form of two hexagons. Mg(2+) serves as cofactor.

The protein localises to the cytoplasm. It catalyses the reaction L-glutamate + NH4(+) + ATP = L-glutamine + ADP + phosphate + H(+). Functionally, probably involved in nitrogen metabolism via ammonium assimilation. Catalyzes the ATP-dependent biosynthesis of glutamine from glutamate and ammonia. Beta-glutamate is a much poorer substrate than alpha-glutamate. In Archaeoglobus fulgidus (strain ATCC 49558 / DSM 4304 / JCM 9628 / NBRC 100126 / VC-16), this protein is Glutamine synthetase.